Reading from the N-terminus, the 341-residue chain is S-adenosylmethionine:tRNA ribosyltransferase-isomerase (341 aa).

The protein belongs to the QueA family. In terms of assembly, monomer.

It is found in the cytoplasm. It catalyses the reaction 7-aminomethyl-7-carbaguanosine(34) in tRNA + S-adenosyl-L-methionine = epoxyqueuosine(34) in tRNA + adenine + L-methionine + 2 H(+). It functions in the pathway tRNA modification; tRNA-queuosine biosynthesis. Its function is as follows. Transfers and isomerizes the ribose moiety from AdoMet to the 7-aminomethyl group of 7-deazaguanine (preQ1-tRNA) to give epoxyqueuosine (oQ-tRNA). The sequence is that of S-adenosylmethionine:tRNA ribosyltransferase-isomerase from Thermoanaerobacter sp. (strain X514).